Reading from the N-terminus, the 254-residue chain is Alcohol dehydrogenase (254 aa).

10-33 (FVAGLGGIGLDTSREIVKSGPKNL) serves as a coordination point for NAD(+). Residue serine 138 coordinates substrate. Tyrosine 151 (proton acceptor) is an active-site residue.

It belongs to the short-chain dehydrogenases/reductases (SDR) family. As to quaternary structure, homodimer.

The enzyme catalyses a primary alcohol + NAD(+) = an aldehyde + NADH + H(+). It carries out the reaction a secondary alcohol + NAD(+) = a ketone + NADH + H(+). The sequence is that of Alcohol dehydrogenase (Adh) from Drosophila hawaiiensis (Fruit fly).